Reading from the N-terminus, the 267-residue chain is 4-hydroxy-tetrahydrodipicolinate reductase (267 aa).

NAD(+) contacts are provided by residues G8–M13 and E34. Residue R35 participates in NADP(+) binding. NAD(+)-binding positions include G98–T100 and A122–M125. H155 acts as the Proton donor/acceptor in catalysis. H156 provides a ligand contact to (S)-2,3,4,5-tetrahydrodipicolinate. K159 serves as the catalytic Proton donor. A (S)-2,3,4,5-tetrahydrodipicolinate-binding site is contributed by G165–T166.

Belongs to the DapB family.

Its subcellular location is the cytoplasm. It catalyses the reaction (S)-2,3,4,5-tetrahydrodipicolinate + NAD(+) + H2O = (2S,4S)-4-hydroxy-2,3,4,5-tetrahydrodipicolinate + NADH + H(+). The catalysed reaction is (S)-2,3,4,5-tetrahydrodipicolinate + NADP(+) + H2O = (2S,4S)-4-hydroxy-2,3,4,5-tetrahydrodipicolinate + NADPH + H(+). Its pathway is amino-acid biosynthesis; L-lysine biosynthesis via DAP pathway; (S)-tetrahydrodipicolinate from L-aspartate: step 4/4. Its function is as follows. Catalyzes the conversion of 4-hydroxy-tetrahydrodipicolinate (HTPA) to tetrahydrodipicolinate. The sequence is that of 4-hydroxy-tetrahydrodipicolinate reductase from Geotalea daltonii (strain DSM 22248 / JCM 15807 / FRC-32) (Geobacter daltonii).